A 609-amino-acid polypeptide reads, in one-letter code: Snake venom metalloproteinase-disintegrin-like mocarhagin (609 aa).

The first 20 residues, 1 to 20 (MIQALLVAICLAVFPYQGSS), serve as a signal peptide directing secretion. Residues 21–191 (IILESGNVND…DEPIEKSSQL (171 aa)) constitute a propeptide that is removed on maturation. The Peptidase M12B domain occupies 205–400 (KYIEFYVVVD…DRPQCILNKP (196 aa)). Ca(2+)-binding residues include E208 and D292. N-linked (GlcNAc...) asparagine glycosylation is present at N303. Cystine bridges form between C316–C395, C356–C379, and C358–C363. The Zn(2+) site is built by H341 and H345. C395, N398, V410, N413, F415, E417, E420, and D423 together coordinate Ca(2+). A Disintegrin domain is found at 408-494 (PPVCGNYFVE…KCPKDSFQRN (87 aa)). 14 cysteine pairs are disulfide-bonded: C411-C440, C422-C435, C424-C430, C434-C457, C448-C454, C453-C479, C466-C486, C473-C505, C498-C510, C517-C567, C532-C575, C545-C555, C562-C601, and C595-C606. The D/ECD-tripeptide motif lies at 472-474 (DCD). N507 carries N-linked (GlcNAc...) asparagine glycosylation.

Belongs to the venom metalloproteinase (M12B) family. P-III subfamily. P-IIIa sub-subfamily. As to quaternary structure, monomer. The cofactor is Zn(2+). As to expression, expressed by the venom gland.

It localises to the secreted. Its activity is regulated as follows. Inhibited by EDTA and diisopropyl fluorophosphate (DFP). Also inhibited by an excess of zinc or calcium ions. Its function is as follows. Snake venom zinc metalloproteinase that inhibits platelet aggregation by cleaving platelet glycoprotein Ib alpha (GP1BA) at Glu-298/Asp-299, and abolishes binding of von Willebrand factor (VWF) to GPIBA. Cleaves P-selectin glycoprotein ligand-1 (PSGL-1/SELPLG) at Tyr-51/Asp-52, and completely abolishes the binding of PSGL-1 to P-selectin. Anionic amino acid sequences containing sulfated tyrosines are needed for cleavages. Inhibits the thrombin-induced platelet aggregation, and the thrombin-induced release of ATP and ADP. Has lectin activity (inhibited by heparin). The chain is Snake venom metalloproteinase-disintegrin-like mocarhagin from Naja mossambica (Mozambique spitting cobra).